We begin with the raw amino-acid sequence, 487 residues long: 2-aminomuconic semialdehyde dehydrogenase (487 aa).

209–215 contributes to the NAD(+) binding site; sequence GTGPRVG. The active-site Proton acceptor is the E253. The Nucleophile role is filled by C287. A Phosphoserine modification is found at S362.

The protein belongs to the aldehyde dehydrogenase family. Highly expressed in adult kidney and liver. Detected at lower levels in fetal liver and kidney.

It localises to the cytoplasm. The enzyme catalyses 2-aminomuconate 6-semialdehyde + NAD(+) + H2O = (2Z,4E)-2-aminomuconate + NADH + 2 H(+). Its pathway is amino-acid degradation; L-kynurenine degradation. Catalyzes the NAD-dependent oxidation of 2-aminomuconic semialdehyde of the kynurenine metabolic pathway in L-tryptophan degradation. The sequence is that of 2-aminomuconic semialdehyde dehydrogenase from Homo sapiens (Human).